The primary structure comprises 325 residues: GMP reductase (325 aa).

C174 serves as the catalytic Thioimidate intermediate. An NADP(+)-binding site is contributed by 203-226 (IIADGGIRTHGDIAKSVRFGATMV).

It belongs to the IMPDH/GMPR family. GuaC type 2 subfamily.

It catalyses the reaction IMP + NH4(+) + NADP(+) = GMP + NADPH + 2 H(+). In terms of biological role, catalyzes the irreversible NADPH-dependent deamination of GMP to IMP. It functions in the conversion of nucleobase, nucleoside and nucleotide derivatives of G to A nucleotides, and in maintaining the intracellular balance of A and G nucleotides. The protein is GMP reductase of Enterococcus faecalis (strain ATCC 700802 / V583).